We begin with the raw amino-acid sequence, 228 residues long: Protein Iojap, chloroplastic (228 aa).

The disordered stretch occupies residues 1–54; sequence MGGTSAAVPSHGLACAPPAAVTLNPRARRRRASSGSGGHRSSPQQPLRSDLLPP. Residues 1 to 62 constitute a chloroplast transit peptide; sequence MGGTSAAVPS…PPATVACRAR (62 aa).

It belongs to the Iojap/RsfS family. In terms of assembly, interacts with chloroplast ribosomal protein uL14c (rpl14).

The protein resides in the plastid. It localises to the chloroplast. In terms of biological role, may be a ribosome silencing factor (Potential). Involved in plastid biogenesis. Plastids affected by a mutation in Iojap lose the ability to perform translation and lack plastid ribosomes. The protein is Protein Iojap, chloroplastic (Ij) of Zea mays (Maize).